A 427-amino-acid polypeptide reads, in one-letter code: Transcobalamin-2 (427 aa).

Residues 1–18 (MRHLGALLFLLGVLGALA) form the signal peptide. Intrachain disulfides connect C21–C267, C116–C309, and C165–C205. Cob(II)alamin is bound by residues Q104, 152–156 (TSYYQ), H190, 190–194 (HHSVD), N242, S245, Q291, and 395–397 (WQL).

This sequence belongs to the eukaryotic cobalamin transport proteins family. In terms of assembly, interacts with CD320 (via LDL-receptor class A domains).

The protein resides in the secreted. Functionally, primary vitamin B12-binding and transport protein. Delivers cobalamin to cells. The polypeptide is Transcobalamin-2 (TCN2) (Pongo abelii (Sumatran orangutan)).